The sequence spans 291 residues: N-acetylmannosamine kinase (291 aa).

Residues Ala5–Lys12 and Gly132–Cys139 contribute to the ATP site. The Zn(2+) site is built by His156, Cys166, Cys168, and Cys173.

This sequence belongs to the ROK (NagC/XylR) family. NanK subfamily. In terms of assembly, homodimer.

The catalysed reaction is an N-acyl-D-mannosamine + ATP = an N-acyl-D-mannosamine 6-phosphate + ADP + H(+). Its pathway is amino-sugar metabolism; N-acetylneuraminate degradation; D-fructose 6-phosphate from N-acetylneuraminate: step 2/5. Catalyzes the phosphorylation of N-acetylmannosamine (ManNAc) to ManNAc-6-P. The polypeptide is N-acetylmannosamine kinase (Salmonella dublin (strain CT_02021853)).